A 664-amino-acid polypeptide reads, in one-letter code: DNA ligase (664 aa).

Residues 32 to 36 (DAEYD), 81 to 82 (SL), and Glu-113 contribute to the NAD(+) site. The active-site N6-AMP-lysine intermediate is Lys-115. 4 residues coordinate NAD(+): Arg-136, Glu-173, Lys-289, and Lys-313. 4 residues coordinate Zn(2+): Cys-407, Cys-410, Cys-425, and Cys-431. The BRCT domain maps to 586–664 (ASEQPFAGKT…EEQLQAALQS (79 aa)).

Belongs to the NAD-dependent DNA ligase family. LigA subfamily. The cofactor is Mg(2+). It depends on Mn(2+) as a cofactor.

The catalysed reaction is NAD(+) + (deoxyribonucleotide)n-3'-hydroxyl + 5'-phospho-(deoxyribonucleotide)m = (deoxyribonucleotide)n+m + AMP + beta-nicotinamide D-nucleotide.. DNA ligase that catalyzes the formation of phosphodiester linkages between 5'-phosphoryl and 3'-hydroxyl groups in double-stranded DNA using NAD as a coenzyme and as the energy source for the reaction. It is essential for DNA replication and repair of damaged DNA. The protein is DNA ligase of Aeromonas salmonicida (strain A449).